Here is a 258-residue protein sequence, read N- to C-terminus: Imidazole glycerol phosphate synthase subunit HisF (258 aa).

Active-site residues include Asp-12 and Asp-131.

It belongs to the HisA/HisF family. As to quaternary structure, heterodimer of HisH and HisF.

It is found in the cytoplasm. The catalysed reaction is 5-[(5-phospho-1-deoxy-D-ribulos-1-ylimino)methylamino]-1-(5-phospho-beta-D-ribosyl)imidazole-4-carboxamide + L-glutamine = D-erythro-1-(imidazol-4-yl)glycerol 3-phosphate + 5-amino-1-(5-phospho-beta-D-ribosyl)imidazole-4-carboxamide + L-glutamate + H(+). Its pathway is amino-acid biosynthesis; L-histidine biosynthesis; L-histidine from 5-phospho-alpha-D-ribose 1-diphosphate: step 5/9. IGPS catalyzes the conversion of PRFAR and glutamine to IGP, AICAR and glutamate. The HisF subunit catalyzes the cyclization activity that produces IGP and AICAR from PRFAR using the ammonia provided by the HisH subunit. The polypeptide is Imidazole glycerol phosphate synthase subunit HisF (Sinorhizobium fredii (strain NBRC 101917 / NGR234)).